Consider the following 424-residue polypeptide: Dihydroorotase (424 aa).

The Zn(2+) site is built by histidine 61 and histidine 63. Substrate-binding positions include 63 to 65 (HLR) and asparagine 95. Residues aspartate 153, histidine 180, and histidine 233 each coordinate Zn(2+). Asparagine 279 serves as a coordination point for substrate. Aspartate 306 is a Zn(2+) binding site. Residue aspartate 306 is part of the active site. Residue histidine 310 coordinates substrate.

Belongs to the metallo-dependent hydrolases superfamily. DHOase family. Class I DHOase subfamily. It depends on Zn(2+) as a cofactor.

It carries out the reaction (S)-dihydroorotate + H2O = N-carbamoyl-L-aspartate + H(+). It functions in the pathway pyrimidine metabolism; UMP biosynthesis via de novo pathway; (S)-dihydroorotate from bicarbonate: step 3/3. Functionally, catalyzes the reversible cyclization of carbamoyl aspartate to dihydroorotate. The polypeptide is Dihydroorotase (Geobacter metallireducens (strain ATCC 53774 / DSM 7210 / GS-15)).